A 504-amino-acid polypeptide reads, in one-letter code: uncharacterized protein (504 aa).

Positions 36–60 are disordered; the sequence is TAFRMEKEQRLPSQNKPPRGRRRPD. The region spanning 125-309 is the Integrase catalytic domain; it reads QTHEPGRLGL…RPHLQVLPER (185 aa).

This is an uncharacterized protein from Sinorhizobium fredii (strain NBRC 101917 / NGR234).